The chain runs to 500 residues: uncharacterized protein (500 aa).

Low complexity predominate over residues 1-13; it reads MEPSQRSGSFSSI. The disordered stretch occupies residues 1–23; that stretch reads MEPSQRSGSFSSISRRRSRVDSR. Serine 9 is subject to Phosphoserine. Transmembrane regions (helical) follow at residues 87–107, 126–146, 156–176, 183–203, 225–245, 261–281, 312–332, 351–371, 380–400, 408–428, 445–465, and 471–491; these read VSIAFILINSLMSDMSLAVAL, LVIGIPTLISLIFLYPMLCFA, LYFRPMVVSSFAHIFGHLLYC, WIYLILIGRMLNGIGFTTFLY, MNILAQTLGFMAGPFLGGILA, VASWVMLFMWFFYMLTIIFFF, FLLFFLAEVAFIAYFTVNGYQ, GNFIALSALIVAPFILASSFL, IMLGGLFLGILAVAIHLVLDA, VYFFLYSLMIYGYSIGSAPLI, IVVQVGVSLSNTFGSICGGAI, and VGFISLCLGLAAVVYMQLIFM.

Belongs to the major facilitator superfamily.

It localises to the golgi apparatus. The protein localises to the membrane. This is an uncharacterized protein from Schizosaccharomyces pombe (strain 972 / ATCC 24843) (Fission yeast).